Here is a 141-residue protein sequence, read N- to C-terminus: Hemoglobin subunit alpha (141 aa).

A Globin domain is found at 1 to 141 (VLSGDDKSNL…VSTVLTSKYR (141 aa)). Position 3 is a phosphoserine (serine 3). N6-succinyllysine is present on residues lysine 7 and lysine 11. Lysine 16 is modified (N6-acetyllysine; alternate). The residue at position 16 (lysine 16) is an N6-succinyllysine; alternate. Tyrosine 24 is subject to Phosphotyrosine. Residue lysine 40 is modified to N6-succinyllysine. Residue serine 49 is modified to Phosphoserine. Histidine 58 contributes to the O2 binding site. Position 87 (histidine 87) interacts with heme b. Serine 102 is modified (phosphoserine). Threonine 108 carries the phosphothreonine modification. A phosphoserine mark is found at serine 124 and serine 131. Phosphothreonine is present on residues threonine 134 and threonine 137. Position 138 is a phosphoserine (serine 138).

This sequence belongs to the globin family. In terms of assembly, heterotetramer of two alpha chains and two beta chains. Red blood cells.

Its function is as follows. Involved in oxygen transport from the lung to the various peripheral tissues. The sequence is that of Hemoglobin subunit alpha from Microtus pennsylvanicus (Meadow vole).